Here is a 469-residue protein sequence, read N- to C-terminus: 3-isopropylmalate dehydratase large subunit (469 aa).

[4Fe-4S] cluster-binding residues include Cys-346, Cys-406, and Cys-409.

The protein belongs to the aconitase/IPM isomerase family. LeuC type 1 subfamily. As to quaternary structure, heterodimer of LeuC and LeuD. Requires [4Fe-4S] cluster as cofactor.

It carries out the reaction (2R,3S)-3-isopropylmalate = (2S)-2-isopropylmalate. It participates in amino-acid biosynthesis; L-leucine biosynthesis; L-leucine from 3-methyl-2-oxobutanoate: step 2/4. Functionally, catalyzes the isomerization between 2-isopropylmalate and 3-isopropylmalate, via the formation of 2-isopropylmaleate. The sequence is that of 3-isopropylmalate dehydratase large subunit from Lysinibacillus sphaericus (strain C3-41).